The following is a 299-amino-acid chain: Protease HtpX homolog (299 aa).

2 helical membrane-spanning segments follow: residues 14-34 and 39-59; these read WLLL…VGYL and GFGG…TMIF. H143 contributes to the Zn(2+) binding site. The active site involves E144. Residue H147 coordinates Zn(2+). 2 helical membrane-spanning segments follow: residues 153 to 173 and 198 to 218; these read IRIS…AVMA and IILL…ATLV. E227 lines the Zn(2+) pocket.

This sequence belongs to the peptidase M48B family. The cofactor is Zn(2+).

It is found in the cell membrane. This chain is Protease HtpX homolog, found in Streptococcus thermophilus (strain ATCC BAA-491 / LMD-9).